The primary structure comprises 121 residues: uncharacterized protein (121 aa).

Over residues Glu12–Ser24 the composition is skewed to low complexity. Disordered regions lie at residues Glu12–Pro63 and Lys101–Val121. Positions Lys26–Phe35 are enriched in basic residues. The segment covering Gln40–Gln49 has biased composition (polar residues). Basic and acidic residues predominate over residues Gly112 to Val121.

This is an uncharacterized protein from Homo sapiens (Human).